The sequence spans 295 residues: MGIQSSTMKLPLIHEISDYWHLLKPKIMYLVVLTGVTGIIIAPGNIHPLIAVISTLCIALGSGAAGAINMWYDSDIDALMTRTKTRPIPAGKISRSSALEVGLVLSFISVTIMMIAVNYISGILLAISIGFYIYVYTMYLKRRTPQNIVIGGAAGALPPIIGWTSVTGSISIESLVLFLIIFMWTPPHFWALSLLNYHEYEKAKIPMLPVTHGIFTTKIHILVYSILLFPITLLPGLFLKDPVLYEITAIPLGLMFVVQAFQVFKSSISYHYRVMFTYSIIYLFILFTCIMLSSF.

9 helical membrane passes run 30 to 50 (LVVLTGVTGIIIAPGNIHPLI), 51 to 71 (AVISTLCIALGSGAAGAINMW), 93 to 115 (ISRSSALEVGLVLSFISVTIMMI), 119 to 136 (YISGILLAISIGFYIYVY), 148 to 168 (IVIGGAAGALPPIIGWTSVTG), 175 to 195 (LVLFLIIFMWTPPHFWALSLL), 219 to 239 (IHILVYSILLFPITLLPGLFL), 244 to 264 (LYEITAIPLGLMFVVQAFQVF), and 275 to 295 (MFTYSIIYLFILFTCIMLSSF).

This sequence belongs to the UbiA prenyltransferase family. Protoheme IX farnesyltransferase subfamily.

The protein localises to the cell inner membrane. It carries out the reaction heme b + (2E,6E)-farnesyl diphosphate + H2O = Fe(II)-heme o + diphosphate. It functions in the pathway porphyrin-containing compound metabolism; heme O biosynthesis; heme O from protoheme: step 1/1. Functionally, converts heme B (protoheme IX) to heme O by substitution of the vinyl group on carbon 2 of heme B porphyrin ring with a hydroxyethyl farnesyl side group. This chain is Protoheme IX farnesyltransferase, found in Ehrlichia ruminantium (strain Welgevonden).